Consider the following 60-residue polypeptide: Large ribosomal subunit protein uL30 (60 aa).

This sequence belongs to the universal ribosomal protein uL30 family. In terms of assembly, part of the 50S ribosomal subunit.

This chain is Large ribosomal subunit protein uL30, found in Histophilus somni (strain 2336) (Haemophilus somnus).